Here is a 57-residue protein sequence, read N- to C-terminus: Cytochrome b-c1 complex subunit 10, mitochondrial (57 aa).

The Mitochondrial matrix segment spans residues 1 to 23 (MAGTSGLLNAVKPKIQTIDIQAA). Residues 24–44 (AGWGIAAAAGAIWVVQPFGWI) form a helical membrane-spanning segment. Topologically, residues 45-57 (KKTFIDPPPTEEK) are mitochondrial intermembrane.

It belongs to the UQCR11/QCR10 family. As to quaternary structure, component of the ubiquinol-cytochrome c oxidoreductase (cytochrome b-c1 complex, complex III, CIII), a multisubunit enzyme composed of 10 subunits. The complex is composed of 3 respiratory subunits cytochrome b (MT-CYB), cytochrome c1 (CYC1-1 or CYC1-2) and Rieske protein (UCR1-1 or UCR1-2), 2 core protein subunits MPPalpha1 (or MPPalpha2) and MPPB, and 5 low-molecular weight protein subunits QCR7-1 (or QCR7-2), UCRQ-1 (or UCRQ-2), QCR9, UCRY and probably QCR6-1 (or QCR6-2). The complex exists as an obligatory dimer and forms supercomplexes (SCs) in the inner mitochondrial membrane with NADH-ubiquinone oxidoreductase (complex I, CI), resulting in different assemblies (supercomplexes SCI(1)III(2) and SCI(2)III(4)).

It localises to the mitochondrion inner membrane. Its function is as follows. Component of the ubiquinol-cytochrome c oxidoreductase, a multisubunit transmembrane complex that is part of the mitochondrial electron transport chain which drives oxidative phosphorylation. The respiratory chain contains 3 multisubunit complexes succinate dehydrogenase (complex II, CII), ubiquinol-cytochrome c oxidoreductase (cytochrome b-c1 complex, complex III, CIII) and cytochrome c oxidase (complex IV, CIV), that cooperate to transfer electrons derived from NADH and succinate to molecular oxygen, creating an electrochemical gradient over the inner membrane that drives transmembrane transport and the ATP synthase. The cytochrome b-c1 complex catalyzes electron transfer from ubiquinol to cytochrome c, linking this redox reaction to translocation of protons across the mitochondrial inner membrane, with protons being carried across the membrane as hydrogens on the quinol. In the process called Q cycle, 2 protons are consumed from the matrix, 4 protons are released into the intermembrane space and 2 electrons are passed to cytochrome c. This Arabidopsis thaliana (Mouse-ear cress) protein is Cytochrome b-c1 complex subunit 10, mitochondrial (UCRY).